Reading from the N-terminus, the 361-residue chain is Carbamoyl phosphate synthase small chain (361 aa).

The interval 1–173 (MRAALALEDG…SVREEYRFSD (173 aa)) is CPSase. Residues Ser45, Gly225, and Gly227 each coordinate L-glutamine. The 185-residue stretch at 177-361 (EIVVIDCGVK…DEFLAMCREH (185 aa)) folds into the Glutamine amidotransferase type-1 domain. Catalysis depends on Cys252, which acts as the Nucleophile. Residues Leu253, Gln256, Asn294, Gly296, and Phe297 each contribute to the L-glutamine site. Catalysis depends on residues His337 and Glu339.

Belongs to the CarA family. In terms of assembly, composed of two chains; the small (or glutamine) chain promotes the hydrolysis of glutamine to ammonia, which is used by the large (or ammonia) chain to synthesize carbamoyl phosphate. Tetramer of heterodimers (alpha,beta)4.

It carries out the reaction hydrogencarbonate + L-glutamine + 2 ATP + H2O = carbamoyl phosphate + L-glutamate + 2 ADP + phosphate + 2 H(+). It catalyses the reaction L-glutamine + H2O = L-glutamate + NH4(+). Its pathway is amino-acid biosynthesis; L-arginine biosynthesis; carbamoyl phosphate from bicarbonate: step 1/1. It participates in pyrimidine metabolism; UMP biosynthesis via de novo pathway; (S)-dihydroorotate from bicarbonate: step 1/3. In terms of biological role, small subunit of the glutamine-dependent carbamoyl phosphate synthetase (CPSase). CPSase catalyzes the formation of carbamoyl phosphate from the ammonia moiety of glutamine, carbonate, and phosphate donated by ATP, constituting the first step of 2 biosynthetic pathways, one leading to arginine and/or urea and the other to pyrimidine nucleotides. The small subunit (glutamine amidotransferase) binds and cleaves glutamine to supply the large subunit with the substrate ammonia. This Methanopyrus kandleri (strain AV19 / DSM 6324 / JCM 9639 / NBRC 100938) protein is Carbamoyl phosphate synthase small chain.